The chain runs to 336 residues: 4-hydroxy-3-methylbut-2-enyl diphosphate reductase (336 aa).

Cys-32 contributes to the [4Fe-4S] cluster binding site. (2E)-4-hydroxy-3-methylbut-2-enyl diphosphate is bound by residues His-61 and His-94. Residues His-61 and His-94 each coordinate dimethylallyl diphosphate. Isopentenyl diphosphate is bound by residues His-61 and His-94. Cys-116 serves as a coordination point for [4Fe-4S] cluster. His-148 is a (2E)-4-hydroxy-3-methylbut-2-enyl diphosphate binding site. His-148 contacts dimethylallyl diphosphate. His-148 is a binding site for isopentenyl diphosphate. Residue Glu-150 is the Proton donor of the active site. Thr-189 is a (2E)-4-hydroxy-3-methylbut-2-enyl diphosphate binding site. Cys-219 provides a ligand contact to [4Fe-4S] cluster. (2E)-4-hydroxy-3-methylbut-2-enyl diphosphate-binding residues include Ser-247, Ser-248, Asn-249, and Ser-292. Dimethylallyl diphosphate contacts are provided by Ser-247, Ser-248, Asn-249, and Ser-292. Isopentenyl diphosphate contacts are provided by Ser-247, Ser-248, Asn-249, and Ser-292.

Belongs to the IspH family. [4Fe-4S] cluster serves as cofactor.

The catalysed reaction is isopentenyl diphosphate + 2 oxidized [2Fe-2S]-[ferredoxin] + H2O = (2E)-4-hydroxy-3-methylbut-2-enyl diphosphate + 2 reduced [2Fe-2S]-[ferredoxin] + 2 H(+). It catalyses the reaction dimethylallyl diphosphate + 2 oxidized [2Fe-2S]-[ferredoxin] + H2O = (2E)-4-hydroxy-3-methylbut-2-enyl diphosphate + 2 reduced [2Fe-2S]-[ferredoxin] + 2 H(+). It functions in the pathway isoprenoid biosynthesis; dimethylallyl diphosphate biosynthesis; dimethylallyl diphosphate from (2E)-4-hydroxy-3-methylbutenyl diphosphate: step 1/1. It participates in isoprenoid biosynthesis; isopentenyl diphosphate biosynthesis via DXP pathway; isopentenyl diphosphate from 1-deoxy-D-xylulose 5-phosphate: step 6/6. Its function is as follows. Catalyzes the conversion of 1-hydroxy-2-methyl-2-(E)-butenyl 4-diphosphate (HMBPP) into a mixture of isopentenyl diphosphate (IPP) and dimethylallyl diphosphate (DMAPP). Acts in the terminal step of the DOXP/MEP pathway for isoprenoid precursor biosynthesis. The sequence is that of 4-hydroxy-3-methylbut-2-enyl diphosphate reductase from Gluconobacter oxydans (strain 621H) (Gluconobacter suboxydans).